We begin with the raw amino-acid sequence, 91 residues long: Small ribosomal subunit protein uS19 (91 aa).

The protein belongs to the universal ribosomal protein uS19 family.

Its function is as follows. Protein S19 forms a complex with S13 that binds strongly to the 16S ribosomal RNA. This is Small ribosomal subunit protein uS19 from Laribacter hongkongensis (strain HLHK9).